Here is a 372-residue protein sequence, read N- to C-terminus: Phospho-N-acetylmuramoyl-pentapeptide-transferase (372 aa).

The next 10 membrane-spanning stretches (helical) occupy residues leucine 2 to leucine 22, threonine 71 to alanine 91, valine 98 to leucine 118, tyrosine 134 to leucine 154, methionine 176 to isoleucine 196, glycine 211 to serine 231, valine 251 to histidine 271, valine 275 to methionine 295, isoleucine 300 to valine 320, and glutamine 349 to leucine 369.

The protein belongs to the glycosyltransferase 4 family. MraY subfamily. Requires Mg(2+) as cofactor.

The protein localises to the cell inner membrane. The catalysed reaction is UDP-N-acetyl-alpha-D-muramoyl-L-alanyl-gamma-D-glutamyl-meso-2,6-diaminopimeloyl-D-alanyl-D-alanine + di-trans,octa-cis-undecaprenyl phosphate = di-trans,octa-cis-undecaprenyl diphospho-N-acetyl-alpha-D-muramoyl-L-alanyl-D-glutamyl-meso-2,6-diaminopimeloyl-D-alanyl-D-alanine + UMP. It functions in the pathway cell wall biogenesis; peptidoglycan biosynthesis. Functionally, catalyzes the initial step of the lipid cycle reactions in the biosynthesis of the cell wall peptidoglycan: transfers peptidoglycan precursor phospho-MurNAc-pentapeptide from UDP-MurNAc-pentapeptide onto the lipid carrier undecaprenyl phosphate, yielding undecaprenyl-pyrophosphoryl-MurNAc-pentapeptide, known as lipid I. The chain is Phospho-N-acetylmuramoyl-pentapeptide-transferase from Psychrobacter cryohalolentis (strain ATCC BAA-1226 / DSM 17306 / VKM B-2378 / K5).